The primary structure comprises 129 residues: Ribulose bisphosphate carboxylase small subunit (129 aa).

Residues 109-129 (LRMTRTESNGRSQHYMWETQR) form a disordered region.

It belongs to the RuBisCO small chain family. In terms of assembly, heterohexadecamer of 8 large and 8 small subunits.

Its function is as follows. RuBisCO catalyzes two reactions: the carboxylation of D-ribulose 1,5-bisphosphate, the primary event in carbon dioxide fixation, as well as the oxidative fragmentation of the pentose substrate. Both reactions occur simultaneously and in competition at the same active site. Although the small subunit is not catalytic it is essential for maximal activity. The chain is Ribulose bisphosphate carboxylase small subunit from Rhizobium meliloti (strain 1021) (Ensifer meliloti).